A 393-amino-acid chain; its full sequence is tRNA(Met) cytidine acetate ligase (393 aa).

Residues Gly-81, Asn-142, and Arg-167 each contribute to the ATP site.

The protein belongs to the TmcAL family.

It localises to the cytoplasm. The catalysed reaction is cytidine(34) in elongator tRNA(Met) + acetate + ATP = N(4)-acetylcytidine(34) in elongator tRNA(Met) + AMP + diphosphate. In terms of biological role, catalyzes the formation of N(4)-acetylcytidine (ac(4)C) at the wobble position of elongator tRNA(Met), using acetate and ATP as substrates. First activates an acetate ion to form acetyladenylate (Ac-AMP) and then transfers the acetyl group to tRNA to form ac(4)C34. The protein is tRNA(Met) cytidine acetate ligase of Bacillus cereus (strain ZK / E33L).